The primary structure comprises 1134 residues: Tetrathionate reductase subunit A (1134 aa).

The segment at residues 1-31 (MQLSRRDFIKGLVAVGSASVFLAGYSETVDR) is a signal peptide (tat-type signal). The region spanning 46–133 (GRIVHSACLG…DGIHYLYDPY (88 aa)) is the 4Fe-4S Mo/W bis-MGD-type domain. [4Fe-4S] cluster-binding residues include C53, C56, C60, and C119.

This sequence belongs to the prokaryotic molybdopterin-containing oxidoreductase family. Probably composed of three subunits: TtrA, TtrB and TtrC. Precursor interacts with TtrD. Requires [4Fe-4S] cluster as cofactor. It depends on Mo-bis(molybdopterin guanine dinucleotide) as a cofactor. Post-translationally, exported by the Tat system. The position of the signal peptide cleavage has not been experimentally proven.

The protein resides in the cell membrane. Part of a membrane-bound tetrathionate reductase that catalyzes the reduction of tetrathionate to thiosulfate. TtrA is the catalytic subunit. In Archaeoglobus fulgidus (strain ATCC 49558 / DSM 4304 / JCM 9628 / NBRC 100126 / VC-16), this protein is Tetrathionate reductase subunit A (ttrA).